We begin with the raw amino-acid sequence, 142 residues long: Small heat shock protein IbpB (142 aa).

The sHSP domain maps to 26–137; it reads AGEGQSFPPY…AAQRIAISER (112 aa).

It belongs to the small heat shock protein (HSP20) family. In terms of assembly, homodimer. Forms homomultimers of about 100-150 subunits at optimal growth temperatures. Conformation changes to oligomers at high temperatures or high ionic concentrations. The decrease in size of the multimers is accompanied by an increase in chaperone activity.

It is found in the cytoplasm. In terms of biological role, associates with aggregated proteins, together with IbpA, to stabilize and protect them from irreversible denaturation and extensive proteolysis during heat shock and oxidative stress. Aggregated proteins bound to the IbpAB complex are more efficiently refolded and reactivated by the ATP-dependent chaperone systems ClpB and DnaK/DnaJ/GrpE. Its activity is ATP-independent. This chain is Small heat shock protein IbpB, found in Shigella boydii serotype 18 (strain CDC 3083-94 / BS512).